The primary structure comprises 284 residues: MAEITAKMVADLRAATGLGMMECKKALVEAEGNFDKAEEILRIKSGAKAGKLAGRTAAEGVLAYAINGNVGALVEVNCETDFVAKDAGFVEFANFVAKTAAEKKPASVEELSELVEAERKAIIAKLGENMSVRRFQVIDTANQLVAYIHGALATEGVLVEYKGSEDVARKIGMHIVAAKPQCVSEAEVDAETVEKERHIYTEQAIASGKPADIAAKMVEGRIRKFLAEITLNGQAFVMNPDQTVAQFSKENGTEVISFVRYKVGDGIEKKAVDYAAEVAAAAKV.

An involved in Mg(2+) ion dislocation from EF-Tu region spans residues 80–83 (TDFV).

This sequence belongs to the EF-Ts family.

It localises to the cytoplasm. Functionally, associates with the EF-Tu.GDP complex and induces the exchange of GDP to GTP. It remains bound to the aminoacyl-tRNA.EF-Tu.GTP complex up to the GTP hydrolysis stage on the ribosome. In Neisseria meningitidis serogroup A / serotype 4A (strain DSM 15465 / Z2491), this protein is Elongation factor Ts.